Here is a 127-residue protein sequence, read N- to C-terminus: Small ribosomal subunit protein bS6 (127 aa).

The segment covering 106–117 (ERKAQSEKKEAE) has biased composition (basic and acidic residues). The tract at residues 106-127 (ERKAQSEKKEAEVSEGEGGTEA) is disordered. Positions 118-127 (VSEGEGGTEA) are enriched in acidic residues.

It belongs to the bacterial ribosomal protein bS6 family.

Binds together with bS18 to 16S ribosomal RNA. This chain is Small ribosomal subunit protein bS6, found in Thermotoga neapolitana (strain ATCC 49049 / DSM 4359 / NBRC 107923 / NS-E).